Reading from the N-terminus, the 246-residue chain is Acetoacetate decarboxylase (246 aa).

Lys-116 (schiff-base intermediate with acetoacetate) is an active-site residue.

It belongs to the ADC family.

It carries out the reaction acetoacetate + H(+) = acetone + CO2. Functionally, catalyzes the conversion of acetoacetate to acetone and carbon dioxide. This is Acetoacetate decarboxylase from Burkholderia cenocepacia (strain ATCC BAA-245 / DSM 16553 / LMG 16656 / NCTC 13227 / J2315 / CF5610) (Burkholderia cepacia (strain J2315)).